The following is a 2828-amino-acid chain: MPKRAHWGALSVVLILLWGHPRVALACPHPCACYVPSEVHCTFRSLASVPAGIAKHVERINLGFNSIQALSETSFAGLTKLELLMIHGNEIPSIPDGALRDLSSLQVFKFSYNKLRVITGQTLQGLSNLMRLHIDHNKIEFIHPQAFNGLTSLRLLHLEGNLLHQLHPSTFSTFTFLDYFRLSTIRHLYLAENMVRTLPASMLRNMPLLENLYLQGNPWTCDCEMRWFLEWDAKSRGILKCKKDKAYEGGQLCAMCFSPKKLYKHEIHKLKDMTCLKPSIESPLRQNRSRSIEEEQEQEEDGGSQLILEKFQLPQWSISLNMTDEHGNMVNLVCDIKKPMDVYKIHLNQTDPPDIDINATVALDFECPMTRENYEKLWKLIAYYSEVPVKLHRELMLSKDPRVSYQYRQDADEEALYYTGVRAQILAEPEWVMQPSIDIQLNRRQSTAKKVLLSYYTQYSQTISTKDTRQARGRSWVMIEPSGAVQRDQTVLEGGPCQLSCNVKASESPSIFWVLPDGSILKAPMDDPDSKFSILSSGWLRIKSMEPSDSGLYQCIAQVRDEMDRMVYRVLVQSPSTQPAEKDTVTIGKNPGESVTLPCNALAIPEAHLSWILPNRRIINDLANTSHVYMLPNGTLSIPKVQVSDSGYYRCVAVNQQGADHFTVGITVTKKGSGLPSKRGRRPGAKALSRVREDIVEDEGGSGMGDEENTSRRLLHPKDQEVFLKTKDDAINGDKKAKKGRRKLKLWKHSEKEPETNVAEGRRVFESRRRINMANKQINPERWADILAKVRGKNLPKGTEVPPLIKTTSPPSLSLEVTPPFPAISPPSASPVQTVTSAEESSADVPLLGEEEHVLGTISSASMGLEHNHNGVILVEPEVTSTPLEEVVDDLSEKTEEITSTEGDLKGTAAPTLISEPYEPSPTLHTLDTVYEKPTHEETATEGWSAADVGSSPEPTSSEYEPPLDAVSLAESEPMQYFDPDLETKSQPDEDKMKEDTFAHLTPTPTIWVNDSSTSQLFEDSTIGEPGVPGQSHLQGLTDNIHLVKSSLSTQDTLLIKKGMKEMSQTLQGGNMLEGDPTHSRSSESEGQESKSITLPDSTLGIMSSMSPVKKPAETTVGTLLDKDTTTATTTPRQKVAPSSTMSTHPSRRRPNGRRRLRPNKFRHRHKQTPPTTFAPSETFSTQPTQAPDIKISSQVESSLVPTAWVDNTVNTPKQLEMEKNAEPTSKGTPRRKHGKRPNKHRYTPSTVSSRASGSKPSPSPENKHRNIVTPSSETILLPRTVSLKTEGPYDSLDYMTTTRKIYSSYPKVQETLPVTYKPTSDGKEIKDDVATNVDKHKSDILVTGESITNAIPTSRSLVSTMGEFKEESSPVGFPGTPTWNPSRTAQPGRLQTGIPVTTSGENLTDPPLLKELEDVDFTSEFLSSLTVSTPFHQEEAGSSTTLSSIKVEVASSQAETTTLDQDHLETTVAILLSETRPQNHTPTAARMKEPASSSPSTILMSLGQTTTTKPALPSPRISQASRDSKENVFLNYVGNPETEATPVNNEGTQHMSGPNELSTPSSDQDAFNLSTKLELEKQVFGSRSLPRGPDSQRQDGRVHASHQLTRVPAKPILPTATVRLPEMSTQSASRYFVTSQSPRHWTNKPEITTYPSGALPENKQFTTPRLSSTTIPLPLHMSKPSIPSKFTDRRTDQFNGYSKVFGNNNIPEARNPVGKPPSPRIPHYSNGRLPFFTNKTLSFPQLGVTRRPQIPTSPAPVMRERKVIPGSYNRIHSHSTFHLDFGPPAPPLLHTPQTTGSPSTNLQNIPMVSSTQSSISFITSSVQSSGSFHQSSSKFFAGGPPASKFWSLGEKPQILTKSPQTVSVTAETDTVFPCEATGKPKPFVTWTKVSTGALMTPNTRIQRFEVLKNGTLVIRKVQVQDRGQYMCTASNLHGLDRMVVLLSVTVQQPQILASHYQDVTVYLGDTIAMECLAKGTPAPQISWIFPDRRVWQTVSPVEGRITLHENRTLSIKEASFSDRGVYKCVASNAAGADSLAIRLHVAALPPVIHQEKLENISLPPGLSIHIHCTAKAAPLPSVRWVLGDGTQIRPSQFLHGNLFVFPNGTLYIRNLAPKDSGRYECVAANLVGSARRTVQLNVQRAAANARITGTSPRRTDVRYGGTLKLDCSASGDPWPRILWRLPSKRMIDALFSFDSRIKVFANGTLVVKSVTDKDAGDYLCVARNKVGDDYVVLKVDVVMKPAKIEHKEENDHKVFYGGDLKVDCVATGLPNPEISWSLPDGSLVNSFMQSDDSGGRTKRYVVFNNGTLYFNEVGMREEGDYTCFAENQVGKDEMRVRVKVVTAPATIRNKTYLAVQVPYGDVVTVACEAKGEPMPKVTWLSPTNKVIPTSSEKYQIYQDGTLLIQKAQRSDSGNYTCLVRNSAGEDRKTVWIHVNVQPPKINGNPNPITTVREIAAGGSRKLIDCKAEGIPTPRVLWAFPEGVVLPAPYYGNRITVHGNGSLDIRSLRKSDSVQLVCMARNEGGEARLILQLTVLEPMEKPIFHDPISEKITAMAGHTISLNCSAAGTPTPSLVWVLPNGTDLQSGQQLQRFYHKADGMLHISGLSSVDAGAYRCVARNAAGHTERLVSLKVGLKPEANKQYHNLVSIINGETLKLPCTPPGAGQGRFSWTLPNGMHLEGPQTLGRVSLLDNGTLTVREASVFDRGTYVCRMETEYGPSVTSIPVIVIAYPPRITSEPTPVIYTRPGNTVKLNCMAMGIPKADITWELPDKSHLKAGVQARLYGNRFLHPQGSLTIQHATQRDAGFYKCMAKNILGSDSKTTYIHVF.

The N-terminal stretch at 1-26 (MPKRAHWGALSVVLILLWGHPRVALA) is a signal peptide. The LRRNT domain maps to 27 to 55 (CPHPCACYVPSEVHCTFRSLASVPAGIAK). LRR repeat units lie at residues 56-77 (HVERINLGFNSIQALSETSFAG), 80-101 (KLELLMIHGNEIPSIPDGALRD), 104-125 (SLQVFKFSYNKLRVITGQTLQG), 128-149 (NLMRLHIDHNKIEFIHPQAFNG), 152-173 (SLRLLHLEGNLLHQLHPSTFST), and 184-205 (TIRHLYLAENMVRTLPASMLRN). An LRRCT domain is found at 217–277 (NPWTCDCEMR…HKLKDMTCLK (61 aa)). N-linked (GlcNAc...) asparagine glycosylation is found at Asn287 and Asn321. Ig-like C2-type domains lie at 481–571 (PSGA…YRVL) and 575–669 (PSTQ…ITVT). 2 disulfide bridges follow: Cys501-Cys555 and Cys599-Cys651. Residue Asn633 is glycosylated (N-linked (GlcNAc...) asparagine). Disordered regions lie at residues 671–715 (KGSG…RRLL), 933–962 (KPTHEETATEGWSAADVGSSPEPTSSEYEP), 1068–1190 (QGGN…APDI), 1204–1275 (AWVD…SSET), and 1367–1389 (EESSPVGFPGTPTWNPSRTAQPG). Residues 695–708 (IVEDEGGSGMGDEE) are compositionally biased toward acidic residues. O-linked (Xyl...) (chondroitin sulfate) serine glycosylation is present at Ser702. A compositionally biased stretch (low complexity) spans 951–962 (SSPEPTSSEYEP). Polar residues predominate over residues 1090–1107 (SKSITLPDSTLGIMSSMS). The segment covering 1146–1168 (PSRRRPNGRRRLRPNKFRHRHKQ) has biased composition (basic residues). Polar residues-rich tracts occupy residues 1169-1190 (TPPTTFAPSETFSTQPTQAPDI) and 1204-1214 (AWVDNTVNTPK). Over residues 1229–1243 (TPRRKHGKRPNKHRY) the composition is skewed to basic residues. An N-linked (GlcNAc...) asparagine glycan is attached at Asn1403. The stretch at 1410–1434 (LKELEDVDFTSEFLSSLTVSTPFHQ) is one LRR 7 repeat. 5 disordered regions span residues 1479–1499 (QNHTPTAARMKEPASSSPSTI), 1536–1566 (NPETEATPVNNEGTQHMSGPNELSTPSSDQD), 1579–1603 (QVFGSRSLPRGPDSQRQDGRVHASH), 1669–1689 (STTIPLPLHMSKPSIPSKFTD), and 1700–1719 (KVFGNNNIPEARNPVGKPPS). Positions 1542 to 1566 (TPVNNEGTQHMSGPNELSTPSSDQD) are enriched in polar residues. Asn1735 carries N-linked (GlcNAc...) asparagine glycosylation. Ig-like C2-type domains lie at 1853–1946 (PQIL…LSVT), 1950–2041 (PQIL…IRLH), 2046–2140 (PPVI…LNVQ), 2146–2239 (ARIT…VDVV), 2242–2343 (PAKI…KVVT), 2345–2432 (PATI…KTVW), 2440–2534 (PKIN…LQLT), 2542–2630 (PIFH…RLVS), 2637–2722 (PEAN…PSVT), and 2733–2828 (PRIT…IHVF). Cystine bridges form between Cys1875–Cys1928 and Cys1972–Cys2025. Asn2007 and Asn2056 each carry an N-linked (GlcNAc...) asparagine glycan. Cystine bridges form between Cys2069-Cys2122, Cys2168-Cys2221, Cys2265-Cys2324, Cys2368-Cys2418, Cys2466-Cys2518, Cys2564-Cys2616, Cys2659-Cys2711, and Cys2755-Cys2810. A glycan (N-linked (GlcNAc...) asparagine) is linked at Asn2693.

In terms of tissue distribution, detected in placenta (at protein level). Detected in cerebrospinal fluid and fibroblasts (at protein level). Highly expressed in kidney, also detected on liver and spleen. Expressed by proximal tubular cells of the kidney (at protein level). Expression highly increases during chronic kidney disease and autosomal dominant polycystic kidney disease, where is detected in cysts.

The protein resides in the secreted. Functionally, in kidney, has anti-inflammatory and anti-fibrotic properties by limiting the induction of chemokines, fibronectin and collagen expression in response to TGB1 and pro-inflammatory stimuli. This is Matrix-remodeling-associated protein 5 (MXRA5) from Homo sapiens (Human).